A 264-amino-acid chain; its full sequence is Transmembrane protein 270 (264 aa).

Transmembrane regions (helical) follow at residues 31–51 (HLYR…LGLA), 74–94 (LSLA…LLLW), and 133–153 (LFLS…LLTW). Over residues 227 to 236 (AQEVKSQETS) the composition is skewed to polar residues. Positions 227–264 (AQEVKSQETSGPPPQFLIPESSTTESGPLPPQPETPGE) are disordered. Positions 254–264 (PLPPQPETPGE) are enriched in pro residues.

Testis.

It is found in the membrane. This is Transmembrane protein 270 from Mus musculus (Mouse).